A 284-amino-acid chain; its full sequence is uncharacterized protein (284 aa).

A signal peptide spans 1 to 21 (MKTTMLMLVLLVCSYIHYVCA). Transmembrane regions (helical) follow at residues 88 to 108 (AGPF…FLWA), 144 to 164 (ALGV…LGVW), and 212 to 232 (VFTT…SPTY).

It localises to the membrane. This is an uncharacterized protein from Schizosaccharomyces pombe (strain 972 / ATCC 24843) (Fission yeast).